Consider the following 391-residue polypeptide: ATP phosphoribosyltransferase regulatory subunit (391 aa).

It belongs to the class-II aminoacyl-tRNA synthetase family. HisZ subfamily. As to quaternary structure, heteromultimer composed of HisG and HisZ subunits.

It localises to the cytoplasm. It functions in the pathway amino-acid biosynthesis; L-histidine biosynthesis; L-histidine from 5-phospho-alpha-D-ribose 1-diphosphate: step 1/9. Its function is as follows. Required for the first step of histidine biosynthesis. May allow the feedback regulation of ATP phosphoribosyltransferase activity by histidine. This is ATP phosphoribosyltransferase regulatory subunit from Prochlorococcus marinus (strain SARG / CCMP1375 / SS120).